A 359-amino-acid polypeptide reads, in one-letter code: Peptide chain release factor 1 (359 aa).

Gln-236 carries the N5-methylglutamine modification.

Belongs to the prokaryotic/mitochondrial release factor family. In terms of processing, methylated by PrmC. Methylation increases the termination efficiency of RF1.

The protein localises to the cytoplasm. Peptide chain release factor 1 directs the termination of translation in response to the peptide chain termination codons UAG and UAA. This chain is Peptide chain release factor 1, found in Streptococcus pneumoniae serotype 4 (strain ATCC BAA-334 / TIGR4).